The sequence spans 249 residues: MPSVEVLRFEPLLEGVLQRRWKRFLSEVELAGGELVTAHCANTGPMTGVLHPGGRVRVRHDPSPKRKLAYTWEQAEMPGDGGWVGVNTALPNRLLRATIEAGLLEPWLGPIAGVRAEVTYGRERRSRIDLLLQPAPEADDQRPIYVEIKNTTWSAADLALFPDTVTERGQKHLEELMHVLPDARAVLIPCVSRSDVKRFAPGDSADPRYGELFRQAIDAGVEVVPCQFSFAADAVRFEGVLPVQRTESG.

Belongs to the SfsA family.

The sequence is that of Sugar fermentation stimulation protein homolog from Synechococcus sp. (strain RCC307).